A 691-amino-acid chain; its full sequence is Protein vreteno (691 aa).

The tract at residues 128-155 (QKEREITSDPVTSTEPMPTPGPAISATE) is disordered. Tudor domains lie at 366 to 427 (KLQS…LAGL) and 573 to 630 (APPI…FIFP).

As to quaternary structure, interacts with aub and piwi. In terms of tissue distribution, gonad-specific.

Its subcellular location is the cytoplasm. It is found in the cytoplasmic ribonucleoprotein granule. Its function is as follows. Gonad-specific protein essential for germline development to repress transposable elements and preventing their mobilization, which is essential for the germline integrity. Acts via the piRNA metabolic process in both germline and somatic gonadal tissues by mediating the repression of transposable elements during meiosis. Required for primary piRNA biogenesis in both germline and somatic gonadal tissues. The polypeptide is Protein vreteno (vret) (Drosophila melanogaster (Fruit fly)).